A 249-amino-acid polypeptide reads, in one-letter code: 2,3-bisphosphoglycerate-dependent phosphoglycerate mutase (249 aa).

Residues 8–15 (RHGQSVWN), 21–22 (TG), R60, 87–90 (ERHY), K98, 114–115 (RR), and 183–184 (GN) contribute to the substrate site. H9 functions as the Tele-phosphohistidine intermediate in the catalytic mechanism. E87 acts as the Proton donor/acceptor in catalysis.

This sequence belongs to the phosphoglycerate mutase family. BPG-dependent PGAM subfamily. As to quaternary structure, homodimer.

It carries out the reaction (2R)-2-phosphoglycerate = (2R)-3-phosphoglycerate. Its pathway is carbohydrate degradation; glycolysis; pyruvate from D-glyceraldehyde 3-phosphate: step 3/5. Its function is as follows. Catalyzes the interconversion of 2-phosphoglycerate and 3-phosphoglycerate. The sequence is that of 2,3-bisphosphoglycerate-dependent phosphoglycerate mutase from Solidesulfovibrio magneticus (strain ATCC 700980 / DSM 13731 / RS-1) (Desulfovibrio magneticus).